Consider the following 166-residue polypeptide: Phosphopantetheine adenylyltransferase (166 aa).

Residue serine 11 coordinates substrate. Residues 11–12 (SF) and histidine 19 contribute to the ATP site. Positions 43, 80, and 94 each coordinate substrate. ATP contacts are provided by residues 95-97 (GLR), glutamate 105, and 130-136 (VRTITAT).

This sequence belongs to the bacterial CoaD family. As to quaternary structure, homohexamer. The cofactor is Mg(2+).

It localises to the cytoplasm. It carries out the reaction (R)-4'-phosphopantetheine + ATP + H(+) = 3'-dephospho-CoA + diphosphate. The protein operates within cofactor biosynthesis; coenzyme A biosynthesis; CoA from (R)-pantothenate: step 4/5. Its function is as follows. Reversibly transfers an adenylyl group from ATP to 4'-phosphopantetheine, yielding dephospho-CoA (dPCoA) and pyrophosphate. This Mesorhizobium japonicum (strain LMG 29417 / CECT 9101 / MAFF 303099) (Mesorhizobium loti (strain MAFF 303099)) protein is Phosphopantetheine adenylyltransferase.